Consider the following 129-residue polypeptide: Small ribosomal subunit protein uS9 (129 aa).

It belongs to the universal ribosomal protein uS9 family.

The polypeptide is Small ribosomal subunit protein uS9 (Helicobacter pylori (strain Shi470)).